Here is a 204-residue protein sequence, read N- to C-terminus: Ras-related protein Rab-7L1 (204 aa).

GTP is bound by residues serine 33, lysine 34, histidine 35, tyrosine 36, lysine 37, and threonine 39. Positions 36-44 match the Effector region motif; the sequence is YKSTVGVDF. Threonine 71 carries the post-translational modification Phosphothreonine; by LRRK2. A Phosphoserine modification is found at serine 72. Positions 126, 156, and 157 each coordinate GTP. S-geranylgeranyl cysteine attachment occurs at residues cysteine 203 and cysteine 204.

The protein belongs to the small GTPase superfamily. Rab family. Interacts with LRRK2 (via the N-terminus); this interaction is direct and stimulates kinase activity. As to expression, expressed predominantly in kidney and much less in brain, heart, muscle, fat, liver, spleen, adrenal gland, ovary, thymus and lung. Not expressed in testis and intestine.

The protein localises to the cell membrane. The protein resides in the cytoplasm. It is found in the perinuclear region. Its subcellular location is the golgi apparatus. It localises to the golgi apparatus membrane. The protein localises to the trans-Golgi network. The protein resides in the cytoskeleton. Functionally, the small GTPases Rab are key regulators in vesicle trafficking. Essential for maintaining the integrity of endosome-trans-Golgi network structure. Together with LRRK2, plays a role in the retrograde trafficking pathway for recycling proteins, such as mannose 6 phosphate receptor (M6PR), between lysosomes and the Golgi apparatus in a retromer-dependent manner. Recruits LRRK2 to the Golgi apparatus and stimulates LRRK2 kinase activity. Stimulates phosphorylation of RAB10 'Thr-73' by LRRK2. Regulates also neuronal process morphology in the intact central nervous system (CNS). The chain is Ras-related protein Rab-7L1 (Rab29) from Rattus norvegicus (Rat).